We begin with the raw amino-acid sequence, 553 residues long: Chaperonin GroEL (553 aa).

ATP-binding positions include 30–33 (TLGP), lysine 51, 87–91 (DGTTT), glycine 415, and aspartate 495.

It belongs to the chaperonin (HSP60) family. In terms of assembly, forms a cylinder of 14 subunits composed of two heptameric rings stacked back-to-back. Interacts with the co-chaperonin GroES.

The protein localises to the cytoplasm. The catalysed reaction is ATP + H2O + a folded polypeptide = ADP + phosphate + an unfolded polypeptide.. Its function is as follows. Together with its co-chaperonin GroES, plays an essential role in assisting protein folding. The GroEL-GroES system forms a nano-cage that allows encapsulation of the non-native substrate proteins and provides a physical environment optimized to promote and accelerate protein folding. The polypeptide is Chaperonin GroEL (Buchnera aphidicola subsp. Tuberolachnus salignus).